The following is a 206-amino-acid chain: Large ribosomal subunit protein uL4 (206 aa).

The disordered stretch occupies residues 48 to 97 (THAVKNRSLVSGGGKKPWKQKHTGRARQGSTRASQWVGGGKAMGPKPRDY). Over residues 63–72 (KPWKQKHTGR) the composition is skewed to basic residues.

This sequence belongs to the universal ribosomal protein uL4 family. Part of the 50S ribosomal subunit.

Functionally, one of the primary rRNA binding proteins, this protein initially binds near the 5'-end of the 23S rRNA. It is important during the early stages of 50S assembly. It makes multiple contacts with different domains of the 23S rRNA in the assembled 50S subunit and ribosome. In terms of biological role, forms part of the polypeptide exit tunnel. The protein is Large ribosomal subunit protein uL4 of Anaeromyxobacter dehalogenans (strain 2CP-1 / ATCC BAA-258).